The primary structure comprises 424 residues: CinA-like protein (424 aa).

Belongs to the CinA family.

This Nostoc sp. (strain PCC 7120 / SAG 25.82 / UTEX 2576) protein is CinA-like protein.